We begin with the raw amino-acid sequence, 309 residues long: uncharacterized protein (309 aa).

Solcar repeat units follow at residues 6–83, 97–211, and 216–302; these read SDLY…LCHS, LTGY…FKRL, and NDKA…VSLL. 6 helical membrane-spanning segments follow: residues 12 to 32, 47 to 67, 100 to 120, 184 to 204, 222 to 242, and 285 to 305; these read ITAGSVAAVFQTTMTYPFEYL, IILPQIKSYFVGCSALNVAAF, YNLLIAGTLTGIVESLFIIPF, VQGTTATIFRQIANTSIQFTA, VITGLATSFTLVAMTQPIDVV, and VGISGGLTFTVYEQVSLLLGF.

This sequence belongs to the mitochondrial carrier (TC 2.A.29) family.

The protein localises to the mitochondrion inner membrane. This is an uncharacterized protein from Saccharomyces cerevisiae (strain ATCC 204508 / S288c) (Baker's yeast).